We begin with the raw amino-acid sequence, 25 residues long: Pancreatic triacylglycerol lipase (25 aa).

A disulfide bridge links C4 with C10.

This sequence belongs to the AB hydrolase superfamily. Lipase family. In terms of assembly, forms a 1:1 stoichiometric complex with (pro)colipase/CLPS.

The protein resides in the secreted. The catalysed reaction is a triacylglycerol + H2O = a diacylglycerol + a fatty acid + H(+). It catalyses the reaction 1,2,3-tributanoylglycerol + H2O = dibutanoylglycerol + butanoate + H(+). The enzyme catalyses 1,2,3-tri-(9Z-octadecenoyl)-glycerol + H2O = di-(9Z)-octadecenoylglycerol + (9Z)-octadecenoate + H(+). It carries out the reaction all-trans-retinyl hexadecanoate + H2O = all-trans-retinol + hexadecanoate + H(+). The catalysed reaction is 1,2-di-(9Z-octadecenoyl)-glycerol + H2O = (9Z-octadecenoyl)-glycerol + (9Z)-octadecenoate + H(+). Inhibited by bile salts, is reactivated by (pro)colipase/CLPS. Functionally, plays an important role in fat metabolism. It preferentially splits the esters of long-chain fatty acids at positions 1 and 3, producing mainly 2-monoacylglycerol and free fatty acids, and shows considerably higher activity against insoluble emulsified substrates than against soluble ones. This chain is Pancreatic triacylglycerol lipase (PNLIP), found in Felis catus (Cat).